The chain runs to 477 residues: Ankyrin repeat, SAM and basic leucine zipper domain-containing protein 1 (477 aa).

A disordered region spans residues 1-24; the sequence is MAASSLWGPAVAGGGESSESEDDG. A phosphoserine mark is found at serine 17, serine 18, and serine 20. 6 ANK repeats span residues 45–74, 78–107, 110–144, 148–177, 181–210, and 214–243; these read EKNE…SVDS, YGWT…NASF, DKQT…DPNV, RQMT…EVNA, NGYT…NKML, and DGKT…PLEG. The SAM domain maps to 272 to 334; that stretch reads SYTAFGELDL…KILSALKELM (63 aa).

Interacts with DDX4, PIWIL1, RANBP9 and TDRD1.

The protein resides in the cytoplasm. Its function is as follows. Plays a central role during spermatogenesis by repressing transposable elements and preventing their mobilization, which is essential for the germline integrity. Acts via the piRNA metabolic process, which mediates the repression of transposable elements during meiosis by forming complexes composed of piRNAs and Piwi proteins and governs the methylation and subsequent repression of transposons. Its association with pi-bodies suggests a participation in the primary piRNAs metabolic process. Required prior to the pachytene stage to facilitate the production of multiple types of piRNAs, including those associated with repeats involved in the regulation of retrotransposons. May act by mediating protein-protein interactions during germ cell maturation. The sequence is that of Ankyrin repeat, SAM and basic leucine zipper domain-containing protein 1 (ASZ1) from Echinops telfairi (Lesser hedgehog tenrec).